Consider the following 480-residue polypeptide: Glutamyl-tRNA(Gln) amidotransferase subunit A (480 aa).

Residues Lys-74 and Ser-149 each act as charge relay system in the active site. The active-site Acyl-ester intermediate is the Ser-173.

The protein belongs to the amidase family. GatA subfamily. As to quaternary structure, heterotrimer of A, B and C subunits.

The catalysed reaction is L-glutamyl-tRNA(Gln) + L-glutamine + ATP + H2O = L-glutaminyl-tRNA(Gln) + L-glutamate + ADP + phosphate + H(+). Allows the formation of correctly charged Gln-tRNA(Gln) through the transamidation of misacylated Glu-tRNA(Gln) in organisms which lack glutaminyl-tRNA synthetase. The reaction takes place in the presence of glutamine and ATP through an activated gamma-phospho-Glu-tRNA(Gln). The polypeptide is Glutamyl-tRNA(Gln) amidotransferase subunit A (Prochlorococcus marinus (strain MIT 9312)).